Here is a 359-residue protein sequence, read N- to C-terminus: Molybdenum import ATP-binding protein ModC (359 aa).

Residues 1–236 (MNTEIKARFR…IDLPAAFADD (236 aa)) form the ABC transporter domain. Residue 34–41 (GHSGSGKT) coordinates ATP. The 66-residue stretch at 294 to 359 (QSSILNCVSA…AQIKAVALLA (66 aa)) folds into the Mop domain.

The protein belongs to the ABC transporter superfamily. Molybdate importer (TC 3.A.1.8) family. As to quaternary structure, the complex is composed of two ATP-binding proteins (ModC), two transmembrane proteins (ModB) and a solute-binding protein (ModA).

It is found in the cell inner membrane. The enzyme catalyses molybdate(out) + ATP + H2O = molybdate(in) + ADP + phosphate + H(+). Its function is as follows. Part of the ABC transporter complex ModABC involved in molybdenum import. Responsible for energy coupling to the transport system. This chain is Molybdenum import ATP-binding protein ModC, found in Dechloromonas aromatica (strain RCB).